We begin with the raw amino-acid sequence, 737 residues long: Polyribonucleotide nucleotidyltransferase (737 aa).

Mg(2+) contacts are provided by aspartate 489 and aspartate 495. In terms of domain architecture, KH spans 556-615; it reads PKIDTIKIDVDKIKIVIGKGGETIDKIIAETGVKIDIDEEGNVSIYSSDQDAINRAKEII. The region spanning 625–693 is the S1 motif domain; it reads DEVYRAKVVR…EKGRIDASMK (69 aa). The disordered stretch occupies residues 691 to 737; that stretch reads SMKALLPRPPKPEHDEKGEKSERPHRPRHHKDHKPKKEFTETPKDSE. Over residues 700–714 the composition is skewed to basic and acidic residues; that stretch reads PKPEHDEKGEKSERP. Residues 715–724 are compositionally biased toward basic residues; it reads HRPRHHKDHK. The span at 725–737 shows a compositional bias: basic and acidic residues; the sequence is PKKEFTETPKDSE.

The protein belongs to the polyribonucleotide nucleotidyltransferase family. Mg(2+) is required as a cofactor.

It localises to the cytoplasm. The catalysed reaction is RNA(n+1) + phosphate = RNA(n) + a ribonucleoside 5'-diphosphate. Involved in mRNA degradation. Catalyzes the phosphorolysis of single-stranded polyribonucleotides processively in the 3'- to 5'-direction. This Streptococcus pneumoniae (strain 70585) protein is Polyribonucleotide nucleotidyltransferase.